The primary structure comprises 349 residues: Selenide, water dikinase (349 aa).

C17 is a catalytic residue. ATP-binding positions include K20 and 48-50; that span reads MAD. D51 contributes to the Mg(2+) binding site. Residues D68, D91, and 139–141 contribute to the ATP site; that span reads GHS. D91 is a Mg(2+) binding site. A Mg(2+)-binding site is contributed by D227.

The protein belongs to the selenophosphate synthase 1 family. Class I subfamily. In terms of assembly, homodimer. It depends on Mg(2+) as a cofactor.

It catalyses the reaction hydrogenselenide + ATP + H2O = selenophosphate + AMP + phosphate + 2 H(+). Functionally, synthesizes selenophosphate from selenide and ATP. In Rhizobium meliloti (strain 1021) (Ensifer meliloti), this protein is Selenide, water dikinase.